The following is a 1621-amino-acid chain: Lysophospholipase NTE1 (1621 aa).

Residues 1–12 (MSSIPTPPDANG) lie on the Cytoplasmic side of the membrane. The helical transmembrane segment at 13 to 33 (NPLIALAVAVIYAILYVLQGV) threads the bilayer. Residues 34–59 (KYGVSLLTIGIPSCIVRMLQYSLTIS) lie on the Lumenal side of the membrane. The helical transmembrane segment at 60 to 80 (LGFPHLLALFAGALLALFFLI) threads the bilayer. The Cytoplasmic portion of the chain corresponds to 81-1621 (RYRYLTRYAQ…RGNRLRRMSI (1541 aa)). Disordered stretches follow at residues 188–209 (PDAS…TRPS), 250–379 (EGEE…SVPR), 545–566 (QTAT…LDET), 648–667 (WNLN…QRDD), 711–735 (VSAL…GSTR), 772–791 (DDEA…GASG), and 839–870 (FRST…ERPF). Composition is skewed to low complexity over residues 195–209 (TPTP…TRPS) and 348–361 (RRSQ…RLNS). Residues 788 to 907 (GASG…GYLS) and 951 to 1070 (RLLS…IAGR) contribute to the a nucleoside 3',5'-cyclic phosphate site. Residues 839-867 (FRSTSSNQENPNSTPGSKHRQSSFGSSNE) are compositionally biased toward polar residues. In terms of domain architecture, PNPLA spans 1316 to 1480 (LVLGGGGARG…MDNTPIQPLR (165 aa)). The GXGXXG motif lies at 1320-1325 (GGGARG). The GXSXG motif lies at 1347 to 1351 (GCSIG). The active-site Nucleophile is the Ser-1349. The active-site Proton acceptor is the Asp-1467. Residues 1467–1469 (DGG) carry the DGA/G motif.

Belongs to the NTE family.

The protein resides in the endoplasmic reticulum membrane. The catalysed reaction is a 1-acyl-sn-glycero-3-phosphocholine + H2O = sn-glycerol 3-phosphocholine + a fatty acid + H(+). Its activity is regulated as follows. Inhibited by organophosphorus esters. Functionally, intracellular phospholipase B that catalyzes the double deacylation of phosphatidylcholine (PC) to glycerophosphocholine (GroPCho). Plays an important role in membrane lipid homeostasis. Responsible for the rapid PC turnover in response to inositol, elevated temperatures, or when choline is present in the growth medium. The chain is Lysophospholipase NTE1 (NTE1) from Cryptococcus neoformans var. neoformans serotype D (strain B-3501A) (Filobasidiella neoformans).